Reading from the N-terminus, the 208-residue chain is Urease accessory protein UreG 1 (208 aa).

14 to 21 contacts GTP; it reads GPVGSGKT.

The protein belongs to the SIMIBI class G3E GTPase family. UreG subfamily. In terms of assembly, homodimer. UreD, UreF and UreG form a complex that acts as a GTP-hydrolysis-dependent molecular chaperone, activating the urease apoprotein by helping to assemble the nickel containing metallocenter of UreC. The UreE protein probably delivers the nickel.

It localises to the cytoplasm. Functionally, facilitates the functional incorporation of the urease nickel metallocenter. This process requires GTP hydrolysis, probably effectuated by UreG. The protein is Urease accessory protein UreG 1 of Brucella ovis (strain ATCC 25840 / 63/290 / NCTC 10512).